Consider the following 91-residue polypeptide: Small ribosomal subunit protein uS15 (91 aa).

The protein belongs to the universal ribosomal protein uS15 family. As to quaternary structure, part of the 30S ribosomal subunit. Forms a bridge to the 50S subunit in the 70S ribosome, contacting the 23S rRNA.

Its function is as follows. One of the primary rRNA binding proteins, it binds directly to 16S rRNA where it helps nucleate assembly of the platform of the 30S subunit by binding and bridging several RNA helices of the 16S rRNA. Forms an intersubunit bridge (bridge B4) with the 23S rRNA of the 50S subunit in the ribosome. The chain is Small ribosomal subunit protein uS15 from Rickettsia felis (strain ATCC VR-1525 / URRWXCal2) (Rickettsia azadi).